Consider the following 102-residue polypeptide: MQKIRKGDKVVVLTGKDKGRSGEVIQVMPKEDRAVVQGINVVKRHQRQTQTQEAGIINKEASVHLSNLAIADKDGKPTRVGFSVVDGKKVRVAKRSGEVIDG.

Belongs to the universal ribosomal protein uL24 family. In terms of assembly, part of the 50S ribosomal subunit.

Functionally, one of two assembly initiator proteins, it binds directly to the 5'-end of the 23S rRNA, where it nucleates assembly of the 50S subunit. Its function is as follows. One of the proteins that surrounds the polypeptide exit tunnel on the outside of the subunit. The polypeptide is Large ribosomal subunit protein uL24 (Allorhizobium ampelinum (strain ATCC BAA-846 / DSM 112012 / S4) (Agrobacterium vitis (strain S4))).